Reading from the N-terminus, the 416-residue chain is E3 ubiquitin-protein ligase RNFT1 (416 aa).

Disordered stretches follow at residues 1–50 and 68–117; these read MKHR…MSLP and DLSS…DSRE. A compositionally biased stretch (basic and acidic residues) spans 7–19; the sequence is HERQSSTESKNLK. 2 stretches are compositionally biased toward polar residues: residues 20–45 and 68–80; these read ETTQ…SPSA and DLSS…VARS. Over residues 81 to 100 the composition is skewed to basic residues; sequence NSRRVRPSTHGRSPSRHGHT. Transmembrane regions (helical) follow at residues 146 to 166, 184 to 204, 214 to 234, 237 to 257, 265 to 287, and 302 to 322; these read LVVQ…TFLY, LQCL…YYTF, VFMN…VVGI, FIGK…PSFV, YWYM…PVWF, and WHFG…IIFG. The tract at residues 349 to 400 is required for ubiquitin ligase activity and for protection against ER stress-induced cell death; that stretch reads CSEADGMCAICQAEFTKPIALICQHVFCEECISSWFNKEKTCPLCRTLISNH. The segment at 356-394 adopts an RING-type zinc-finger fold; sequence CAICQAEFTKPIALICQHVFCEECISSWFNKEKTCPLCR.

It localises to the endoplasmic reticulum membrane. It carries out the reaction S-ubiquitinyl-[E2 ubiquitin-conjugating enzyme]-L-cysteine + [acceptor protein]-L-lysine = [E2 ubiquitin-conjugating enzyme]-L-cysteine + N(6)-ubiquitinyl-[acceptor protein]-L-lysine.. Its pathway is protein modification; protein ubiquitination. E3 ubiquitin-protein ligase that acts in the endoplasmic reticulum (ER)-associated degradation (ERAD) pathway, which targets misfolded proteins that accumulate in the endoplasmic reticulum (ER) for ubiquitination and subsequent proteasome-mediated degradation. Protects cells from ER stress-induced apoptosis. The polypeptide is E3 ubiquitin-protein ligase RNFT1 (rnft1) (Xenopus laevis (African clawed frog)).